A 469-amino-acid chain; its full sequence is Phosphatidylinositol 4-kinase type 2-alpha (469 aa).

2 disordered regions span residues 1–30 (MDET…ATVP) and 50–72 (TATS…DQER). Polar residues predominate over residues 16-25 (EYSYQSQCSP). A compositionally biased stretch (low complexity) spans 50-60 (TATSCGSAASG). Residues 115 to 443 (DILPERISQG…VQTPPVIVET (329 aa)) enclose the PI3K/PI4K catalytic domain. The G-loop stretch occupies residues 121 to 127 (ISQGSSG). ATP contacts are provided by residues 122-128 (SQGSSGS) and Lys143. Positions 148 to 150 (EPY) are important for substrate binding. The segment at 156–169 (KWTKWLQKLCCPCC) is important for interaction with membranes. 4 S-palmitoyl cysteine lipidation sites follow: Cys165, Cys166, Cys168, and Cys169. Residue 252 to 255 (QIFV) participates in ATP binding. The interval 259 to 267 (KDADYWLRR) is important for interaction with membranes. Residues 296 to 304 (RNTDRGNDN) are catalytic loop. Residues 334-354 (AIDNGLAFPLKHPDSWRAYPF) form an activation loop region. An ATP-binding site is contributed by Asp336. An important for interaction with membranes region spans residues 349–358 (WRAYPFYWAW).

It belongs to the PI3/PI4-kinase family. Type II PI4K subfamily.

It is found in the golgi apparatus. The protein resides in the trans-Golgi network membrane. It localises to the membrane raft. The protein localises to the endosome. Its subcellular location is the endosome membrane. It is found in the cytoplasmic vesicle. The protein resides in the cell projection. It localises to the dendrite. The protein localises to the presynaptic cell membrane. Its subcellular location is the synapse. It is found in the synaptosome. The protein resides in the mitochondrion. It localises to the membrane. The protein localises to the cell membrane. Its subcellular location is the perikaryon. It is found in the neuron projection. The catalysed reaction is a 1,2-diacyl-sn-glycero-3-phospho-(1D-myo-inositol) + ATP = a 1,2-diacyl-sn-glycero-3-phospho-(1D-myo-inositol 4-phosphate) + ADP + H(+). In terms of biological role, membrane-bound phosphatidylinositol-4 kinase (PI4-kinase) that catalyzes the phosphorylation of phosphatidylinositol (PI) to phosphatidylinositol 4-phosphate (PI4P), a lipid that plays important roles in endocytosis, Golgi function, protein sorting and membrane trafficking. Besides, phosphorylation of phosphatidylinositol (PI) to phosphatidylinositol 4-phosphate (PI4P) is the first committed step in the generation of phosphatidylinositol 4,5-bisphosphate (PIP2), a precursor of the second messenger inositol 1,4,5-trisphosphate (InsP3). The polypeptide is Phosphatidylinositol 4-kinase type 2-alpha (pi4k2a) (Xenopus laevis (African clawed frog)).